A 338-amino-acid polypeptide reads, in one-letter code: uncharacterized protein (338 aa).

The protein belongs to the MG032/MG096/MG288 family.

This is an uncharacterized protein from Mycoplasma pneumoniae (strain ATCC 29342 / M129 / Subtype 1) (Mycoplasmoides pneumoniae).